Reading from the N-terminus, the 348-residue chain is Heat-inducible transcription repressor HrcA (348 aa).

This sequence belongs to the HrcA family.

Its function is as follows. Negative regulator of class I heat shock genes (grpE-dnaK-dnaJ and groELS operons). Prevents heat-shock induction of these operons. This Syntrophobacter fumaroxidans (strain DSM 10017 / MPOB) protein is Heat-inducible transcription repressor HrcA.